Reading from the N-terminus, the 318-residue chain is UDP-N-acetylenolpyruvoylglucosamine reductase (318 aa).

In terms of domain architecture, FAD-binding PCMH-type spans 38-204; it reads IGGICPVVVE…LGIEILLKEG (167 aa). The active site involves Arg-182. The tract at residues 212–232 is disordered; the sequence is SLKDKRDRRNSSQPENKKSAG. The segment covering 213-229 has biased composition (basic and acidic residues); sequence LKDKRDRRNSSQPENKK. Ser-233 (proton donor) is an active-site residue. Residue Glu-310 is part of the active site.

It belongs to the MurB family. FAD serves as cofactor.

Its subcellular location is the cytoplasm. It catalyses the reaction UDP-N-acetyl-alpha-D-muramate + NADP(+) = UDP-N-acetyl-3-O-(1-carboxyvinyl)-alpha-D-glucosamine + NADPH + H(+). It participates in cell wall biogenesis; peptidoglycan biosynthesis. Functionally, cell wall formation. This Leptospira borgpetersenii serovar Hardjo-bovis (strain JB197) protein is UDP-N-acetylenolpyruvoylglucosamine reductase.